A 280-amino-acid chain; its full sequence is Phosphatidylserine decarboxylase proenzyme (280 aa).

Residues D88, H145, and S248 each act as charge relay system; for autoendoproteolytic cleavage activity in the active site. The Schiff-base intermediate with substrate; via pyruvic acid; for decarboxylase activity role is filled by S248. S248 is subject to Pyruvic acid (Ser); by autocatalysis.

Belongs to the phosphatidylserine decarboxylase family. PSD-B subfamily. Prokaryotic type I sub-subfamily. As to quaternary structure, heterodimer of a large membrane-associated beta subunit and a small pyruvoyl-containing alpha subunit. The cofactor is pyruvate. In terms of processing, is synthesized initially as an inactive proenzyme. Formation of the active enzyme involves a self-maturation process in which the active site pyruvoyl group is generated from an internal serine residue via an autocatalytic post-translational modification. Two non-identical subunits are generated from the proenzyme in this reaction, and the pyruvate is formed at the N-terminus of the alpha chain, which is derived from the carboxyl end of the proenzyme. The autoendoproteolytic cleavage occurs by a canonical serine protease mechanism, in which the side chain hydroxyl group of the serine supplies its oxygen atom to form the C-terminus of the beta chain, while the remainder of the serine residue undergoes an oxidative deamination to produce ammonia and the pyruvoyl prosthetic group on the alpha chain. During this reaction, the Ser that is part of the protease active site of the proenzyme becomes the pyruvoyl prosthetic group, which constitutes an essential element of the active site of the mature decarboxylase.

The protein resides in the cell membrane. The enzyme catalyses a 1,2-diacyl-sn-glycero-3-phospho-L-serine + H(+) = a 1,2-diacyl-sn-glycero-3-phosphoethanolamine + CO2. It participates in phospholipid metabolism; phosphatidylethanolamine biosynthesis; phosphatidylethanolamine from CDP-diacylglycerol: step 2/2. Functionally, catalyzes the formation of phosphatidylethanolamine (PtdEtn) from phosphatidylserine (PtdSer). In Methylobacillus flagellatus (strain ATCC 51484 / DSM 6875 / VKM B-1610 / KT), this protein is Phosphatidylserine decarboxylase proenzyme.